The sequence spans 91 residues: Chorion class B protein M3A5 (91 aa).

The segment at 1–51 is central domain; sequence VASENRYEGTVGVSGNLPFLGTADVAGEFPTAGIGEILYGCGNGAVGITRE. The interval 52–91 is right arm (Gly-rich tandem repeats); the sequence is GGLGYGAGYGGGYGLGYGGYGGGYGLGYGGYGGCGCGCGY.

This sequence belongs to the chorion protein family.

Functionally, this protein is one of many from the eggshell of the silk moth. In Bombyx mori (Silk moth), this protein is Chorion class B protein M3A5.